Here is a 232-residue protein sequence, read N- to C-terminus: Protein TIFY 10c (232 aa).

Positions 54–73 (PPAAGAGGAFRPPPTTMNLL) are disordered. The region spanning 114 to 149 (AGEKAQQLTIFYGGKVVVFENFPSTKVKDLLQIVST) is the Tify domain. Positions 151–176 (DGVDKNTGTAATQSLPRPAHNSLPDL) are disordered. Over residues 156–165 (NTGTAATQSL) the composition is skewed to polar residues. The Jas motif lies at 177–202 (PIARRNSLHRFLEKRKGRMNANAPYQ). Residues 179 to 186 (ARRNSLHR) carry the Nuclear localization signal motif.

The protein belongs to the TIFY/JAZ family. Interacts with BHLH148. Interacts with COI1B in a coronatine-dependent manner. Coronatine is an analog of jasmonoyl isoleucine (JA-Ile). Interacts with TIFY5/JAZ2, TIFY6B/JAZ4, TIFY9/JAZ5, TIFY11A, TIFY11D/JAZ12 and TIFY11G/JAZ15. In terms of processing, ubiquitinated. Increase in jasmonoyl isoleucine (JA-Ile) levels mediates its degradation via COI1B-mediated proteasome pathway.

It localises to the nucleus. Its subcellular location is the cytoplasm. The protein localises to the cytosol. Its function is as follows. Repressor of jasmonate (JA) responses. Acts as a repressor of JA-induced resistance to the bacterial blight pathogen Xanthomonas oryzae pv. oryzae (Xoo). Regulates JA-induced accumulation of linalool at the transcriptional level of linalool synthase gene LIS. Linalool is important for resistance to bacterial blight pathogen Xoo. This chain is Protein TIFY 10c, found in Oryza sativa subsp. indica (Rice).